The following is a 303-amino-acid chain: Aspartate carbamoyltransferase catalytic subunit (303 aa).

Carbamoyl phosphate contacts are provided by arginine 49 and threonine 50. Lysine 77 is an L-aspartate binding site. Residues arginine 99, histidine 126, and glutamine 129 each coordinate carbamoyl phosphate. Positions 159 and 211 each coordinate L-aspartate. Serine 252 and proline 253 together coordinate carbamoyl phosphate.

This sequence belongs to the aspartate/ornithine carbamoyltransferase superfamily. ATCase family. In terms of assembly, heterododecamer (2C3:3R2) of six catalytic PyrB chains organized as two trimers (C3), and six regulatory PyrI chains organized as three dimers (R2).

The enzyme catalyses carbamoyl phosphate + L-aspartate = N-carbamoyl-L-aspartate + phosphate + H(+). The protein operates within pyrimidine metabolism; UMP biosynthesis via de novo pathway; (S)-dihydroorotate from bicarbonate: step 2/3. Catalyzes the condensation of carbamoyl phosphate and aspartate to form carbamoyl aspartate and inorganic phosphate, the committed step in the de novo pyrimidine nucleotide biosynthesis pathway. The sequence is that of Aspartate carbamoyltransferase catalytic subunit from Listeria innocua serovar 6a (strain ATCC BAA-680 / CLIP 11262).